The primary structure comprises 201 residues: Recombination protein RecR (201 aa).

A C4-type zinc finger spans residues 60-75 (CSCCGNVDTSDPCTIC). The 96-residue stretch at 83-178 (ATLIVVEDVS…RVTRLAHGVP (96 aa)) folds into the Toprim domain.

It belongs to the RecR family.

May play a role in DNA repair. It seems to be involved in an RecBC-independent recombinational process of DNA repair. It may act with RecF and RecO. This Brucella melitensis biotype 2 (strain ATCC 23457) protein is Recombination protein RecR.